The sequence spans 251 residues: Cholesterol 25-hydroxylase-like protein (251 aa).

The next 3 helical transmembrane spans lie at 22-42, 69-89, and 108-128; these read FFPV…FVLL, WSCL…LSVL, and VVWD…VWHL. The Fatty acid hydroxylase domain maps to 113-247; it reads AACLLLFDFQ…FTHWDKLFGT (135 aa). The Histidine box-1 motif lies at 126 to 130; it reads WHLLH. Residues 141–145 carry the Histidine box-2 motif; that stretch reads HKVHH. The Histidine box-3 motif lies at 222–228; that stretch reads HHDVHHQ.

The protein belongs to the sterol desaturase family. Requires Fe cation as cofactor.

It is found in the endoplasmic reticulum membrane. The enzyme catalyses cholesterol + AH2 + O2 = 25-hydroxycholesterol + A + H2O. It carries out the reaction cholesterol + NADPH + O2 + H(+) = 25-hydroxycholesterol + NADP(+) + H2O. Its function is as follows. Catalyzes the formation of 25-hydroxycholesterol from cholesterol, leading to repress cholesterol biosynthetic enzymes. Plays a key role in cell positioning and movement in lymphoid tissues: 25-hydroxycholesterol is an intermediate in biosynthesis of 7-alpha,25-dihydroxycholesterol (7-alpha,25-OHC), an oxysterol that acts as a ligand for the G protein-coupled receptor GPR183/EBI2, a chemotactic receptor for a number of lymphoid cells. May play an important role in regulating lipid metabolism by synthesizing a corepressor that blocks sterol regulatory element binding protein (SREBP) processing. In testis, production of 25-hydroxycholesterol by macrophages may play a role in Leydig cell differentiation. The sequence is that of Cholesterol 25-hydroxylase-like protein (ch25h) from Danio rerio (Zebrafish).